An 859-amino-acid chain; its full sequence is Leucine--tRNA ligase (859 aa).

Residues 42 to 52 (PYPSGKLHMGH) carry the 'HIGH' region motif. A 'KMSKS' region motif is present at residues 618–622 (KMSKS). K621 contributes to the ATP binding site.

The protein belongs to the class-I aminoacyl-tRNA synthetase family.

The protein resides in the cytoplasm. It carries out the reaction tRNA(Leu) + L-leucine + ATP = L-leucyl-tRNA(Leu) + AMP + diphosphate. In Buchnera aphidicola subsp. Acyrthosiphon pisum (strain APS) (Acyrthosiphon pisum symbiotic bacterium), this protein is Leucine--tRNA ligase.